The primary structure comprises 1071 residues: DNA-directed RNA polymerase subunit beta (1071 aa).

This sequence belongs to the RNA polymerase beta chain family. As to quaternary structure, in plastids the minimal PEP RNA polymerase catalytic core is composed of four subunits: alpha, beta, beta', and beta''. When a (nuclear-encoded) sigma factor is associated with the core the holoenzyme is formed, which can initiate transcription.

It is found in the plastid. The protein localises to the chloroplast. It carries out the reaction RNA(n) + a ribonucleoside 5'-triphosphate = RNA(n+1) + diphosphate. DNA-dependent RNA polymerase catalyzes the transcription of DNA into RNA using the four ribonucleoside triphosphates as substrates. In Anthoceros angustus (Hornwort), this protein is DNA-directed RNA polymerase subunit beta.